Reading from the N-terminus, the 193-residue chain is DNA damage-inducible transcript 4-like protein (193 aa).

It belongs to the DDIT4 family.

It is found in the cytoplasm. Inhibits cell growth by regulating the TOR signaling pathway upstream of the TSC1-TSC2 complex and downstream of AKT1. This chain is DNA damage-inducible transcript 4-like protein (Ddit4l), found in Mus musculus (Mouse).